A 302-amino-acid polypeptide reads, in one-letter code: Oxygen-dependent coproporphyrinogen-III oxidase (302 aa).

Serine 94 is a binding site for substrate. The a divalent metal cation site is built by histidine 98 and histidine 108. Histidine 108 (proton donor) is an active-site residue. A substrate-binding site is contributed by 110-112 (NVR). A divalent metal cation is bound by residues histidine 147 and histidine 177. Residues 242-277 (YVEFNLVYDRGTLFGLQTGGRTESILMSMPPLVRWQ) form an important for dimerization region. 260–262 (GGR) lines the substrate pocket.

It belongs to the aerobic coproporphyrinogen-III oxidase family. In terms of assembly, homodimer. Requires a divalent metal cation as cofactor.

It localises to the cytoplasm. It carries out the reaction coproporphyrinogen III + O2 + 2 H(+) = protoporphyrinogen IX + 2 CO2 + 2 H2O. It participates in porphyrin-containing compound metabolism; protoporphyrin-IX biosynthesis; protoporphyrinogen-IX from coproporphyrinogen-III (O2 route): step 1/1. Its function is as follows. Involved in the heme biosynthesis. Catalyzes the aerobic oxidative decarboxylation of propionate groups of rings A and B of coproporphyrinogen-III to yield the vinyl groups in protoporphyrinogen-IX. This Shewanella sp. (strain MR-4) protein is Oxygen-dependent coproporphyrinogen-III oxidase.